A 276-amino-acid chain; its full sequence is Shikimate dehydrogenase (NADP(+)) (276 aa).

Residues 15-17 (SLS) and threonine 62 each bind shikimate. Catalysis depends on lysine 66, which acts as the Proton acceptor. Glutamate 78 provides a ligand contact to NADP(+). Asparagine 87 and aspartate 102 together coordinate shikimate. Residues 151-156 (NRTVEK) and isoleucine 218 each bind NADP(+). Tyrosine 220 contributes to the shikimate binding site. NADP(+) is bound at residue glycine 241.

This sequence belongs to the shikimate dehydrogenase family. Homodimer.

The catalysed reaction is shikimate + NADP(+) = 3-dehydroshikimate + NADPH + H(+). Its pathway is metabolic intermediate biosynthesis; chorismate biosynthesis; chorismate from D-erythrose 4-phosphate and phosphoenolpyruvate: step 4/7. Functionally, involved in the biosynthesis of the chorismate, which leads to the biosynthesis of aromatic amino acids. Catalyzes the reversible NADPH linked reduction of 3-dehydroshikimate (DHSA) to yield shikimate (SA). The chain is Shikimate dehydrogenase (NADP(+)) from Geobacillus kaustophilus (strain HTA426).